The primary structure comprises 859 residues: Linoleate 9S-lipoxygenase 1 (859 aa).

The PLAT domain occupies 21-161 (VKGTVVLMKK…HYTTDRVFFS (141 aa)). The Lipoxygenase domain maps to 164-859 (TYLPHETPAT…GRGIPNSVSI (696 aa)). The tract at residues 213-246 (KNPRPVLGGTQEYPYPRRGRTGRKPTKEDPQTES) is disordered. Fe cation is bound by residues His519, His524, His711, Asn715, and Ile859.

This sequence belongs to the lipoxygenase family. As to quaternary structure, monomer. It depends on Fe cation as a cofactor. As to expression, seedlings, roots, leaves, and flowers (at protein level). Expressed in guard cells.

Its subcellular location is the cytoplasm. It catalyses the reaction (9Z,12Z)-octadecadienoate + O2 = (9S)-hydroperoxy-(10E,12Z)-octadecadienoate. The enzyme catalyses (9Z,12Z,15Z)-octadecatrienoate + O2 = (9S)-hydroperoxy-(10E,12Z,15Z)-octadecatrienoate. It functions in the pathway lipid metabolism; oxylipin biosynthesis. 9S-lipoxygenase that can use linoleic acid or linolenic acid as substrates. Plant lipoxygenases may be involved in a number of diverse aspects of plant physiology including growth and development, pest resistance, and senescence or responses to wounding. Catalyzes the hydroperoxidation of lipids containing a cis,cis-1,4-pentadiene structure. Function as regulators of root development by controlling the emergence of lateral roots. 9S-lypoxygenase-derived oxylipins may play an antagonistic role to ethylene signaling in the control of responses involving oxidative stress, lipid peroxidation and plant defense. LOX1-derived oxylipins may be involved in stress signaling from roots to shoots in response to cadmium exposure. 9S-lypoxygenase-derived oxylipins are engaged during infection to control the balance between salicylic acid (SA) and jasmonate (JA) signaling to facilitate infection by the fungal pathogen Fusarium graminearum. 9S-lypoxygenase-derived oxylipins activate brassinosteroid signaling to promote cell wall-based defense and limit pathogen infection. The LOX1-derived compound (9S)-hydroperoxy-(10E,12Z,15Z)-octadecatrienoate protects plant tissues against infection by the bacterial pathogen Pseudomonas syringae pv tomato DC3000. The LOX1-derived oxylipins are required to trigger stomatal closure in response to both infection by the bacterial pathogen Pseudomonas syringae pv tomato DC3000, and the pathogen-associated molecular pattern (PAMP) flagellin peptide flg22. Contributes to the oxidation of free fatty acids during seed aging. The sequence is that of Linoleate 9S-lipoxygenase 1 from Arabidopsis thaliana (Mouse-ear cress).